A 188-amino-acid chain; its full sequence is Ribosome-recycling factor (188 aa).

It belongs to the RRF family.

The protein localises to the cytoplasm. Its function is as follows. Responsible for the release of ribosomes from messenger RNA at the termination of protein biosynthesis. May increase the efficiency of translation by recycling ribosomes from one round of translation to another. The polypeptide is Ribosome-recycling factor (Phenylobacterium zucineum (strain HLK1)).